A 184-amino-acid polypeptide reads, in one-letter code: Large ribosomal subunit protein uL6 (184 aa).

It belongs to the universal ribosomal protein uL6 family. As to quaternary structure, part of the 50S ribosomal subunit.

Functionally, this protein binds to the 23S rRNA, and is important in its secondary structure. It is located near the subunit interface in the base of the L7/L12 stalk, and near the tRNA binding site of the peptidyltransferase center. This chain is Large ribosomal subunit protein uL6, found in Methanosphaera stadtmanae (strain ATCC 43021 / DSM 3091 / JCM 11832 / MCB-3).